The following is a 1169-amino-acid chain: Chromosome partition protein Smc (1169 aa).

Pro-32 to Asn-39 serves as a coordination point for ATP. Residues Asp-166–Glu-507 adopt a coiled-coil conformation. The SMC hinge domain occupies Pro-523–Ala-636. Positions Ser-676–Val-1030 form a coiled coil.

The protein belongs to the SMC family. In terms of assembly, homodimer.

It localises to the cytoplasm. Required for chromosome condensation and partitioning. This is Chromosome partition protein Smc from Methanocaldococcus jannaschii (strain ATCC 43067 / DSM 2661 / JAL-1 / JCM 10045 / NBRC 100440) (Methanococcus jannaschii).